A 476-amino-acid chain; its full sequence is UDP-N-acetylmuramate--L-alanine ligase (476 aa).

An ATP-binding site is contributed by 107-113; the sequence is GTHGKTT.

Belongs to the MurCDEF family.

The protein resides in the cytoplasm. The enzyme catalyses UDP-N-acetyl-alpha-D-muramate + L-alanine + ATP = UDP-N-acetyl-alpha-D-muramoyl-L-alanine + ADP + phosphate + H(+). The protein operates within cell wall biogenesis; peptidoglycan biosynthesis. In terms of biological role, cell wall formation. The protein is UDP-N-acetylmuramate--L-alanine ligase of Roseiflexus castenholzii (strain DSM 13941 / HLO8).